Here is a 319-residue protein sequence, read N- to C-terminus: MATH domain and coiled-coil domain-containing protein At3g58200 (319 aa).

The 127-residue stretch at 6–132 (DNKFRWVIKN…NEEVKIVVEV (127 aa)) folds into the MATH domain. The stretch at 255–302 (FKVDWLEKKLEEVKEKKKEEQIGETRMQEMKVFKQKCSDIEALMEREK) forms a coiled coil.

The polypeptide is MATH domain and coiled-coil domain-containing protein At3g58200 (Arabidopsis thaliana (Mouse-ear cress)).